A 314-amino-acid polypeptide reads, in one-letter code: tRNA dimethylallyltransferase (314 aa).

The tract at residues 1–24 (MAEEPQRSPAPTSPFAFTVPSNPL) is disordered. 40–47 (GPTASGKS) serves as a coordination point for ATP. Residue 42 to 47 (TASGKS) coordinates substrate.

Belongs to the IPP transferase family. As to quaternary structure, monomer. It depends on Mg(2+) as a cofactor.

The enzyme catalyses adenosine(37) in tRNA + dimethylallyl diphosphate = N(6)-dimethylallyladenosine(37) in tRNA + diphosphate. Its function is as follows. Catalyzes the transfer of a dimethylallyl group onto the adenine at position 37 in tRNAs that read codons beginning with uridine, leading to the formation of N6-(dimethylallyl)adenosine (i(6)A). This is tRNA dimethylallyltransferase from Cereibacter sphaeroides (strain ATCC 17029 / ATH 2.4.9) (Rhodobacter sphaeroides).